The chain runs to 96 residues: Co-chaperonin GroES (96 aa).

This sequence belongs to the GroES chaperonin family. Heptamer of 7 subunits arranged in a ring. Interacts with the chaperonin GroEL.

The protein resides in the cytoplasm. Functionally, together with the chaperonin GroEL, plays an essential role in assisting protein folding. The GroEL-GroES system forms a nano-cage that allows encapsulation of the non-native substrate proteins and provides a physical environment optimized to promote and accelerate protein folding. GroES binds to the apical surface of the GroEL ring, thereby capping the opening of the GroEL channel. The sequence is that of Co-chaperonin GroES from Pelagibacter ubique (strain HTCC1062).